We begin with the raw amino-acid sequence, 309 residues long: Formamidopyrimidine-DNA glycosylase (309 aa).

Proline 2 serves as the catalytic Schiff-base intermediate with DNA. The Proton donor role is filled by glutamate 3. Residue lysine 56 is the Proton donor; for beta-elimination activity of the active site. DNA-binding residues include histidine 106 and arginine 129. An FPG-type zinc finger spans residues asparagine 271–proline 305. Arginine 295 serves as the catalytic Proton donor; for delta-elimination activity.

This sequence belongs to the FPG family. In terms of assembly, monomer. The cofactor is Zn(2+).

It carries out the reaction Hydrolysis of DNA containing ring-opened 7-methylguanine residues, releasing 2,6-diamino-4-hydroxy-5-(N-methyl)formamidopyrimidine.. It catalyses the reaction 2'-deoxyribonucleotide-(2'-deoxyribose 5'-phosphate)-2'-deoxyribonucleotide-DNA = a 3'-end 2'-deoxyribonucleotide-(2,3-dehydro-2,3-deoxyribose 5'-phosphate)-DNA + a 5'-end 5'-phospho-2'-deoxyribonucleoside-DNA + H(+). Functionally, involved in base excision repair of DNA damaged by oxidation or by mutagenic agents. Acts as a DNA glycosylase that recognizes and removes damaged bases. Has a preference for oxidized purines, such as 7,8-dihydro-8-oxoguanine (8-oxoG). Has AP (apurinic/apyrimidinic) lyase activity and introduces nicks in the DNA strand. Cleaves the DNA backbone by beta-delta elimination to generate a single-strand break at the site of the removed base with both 3'- and 5'-phosphates. This chain is Formamidopyrimidine-DNA glycosylase, found in Psychrobacter arcticus (strain DSM 17307 / VKM B-2377 / 273-4).